The chain runs to 473 residues: Maltose fermentation regulatory protein MAL13 (473 aa).

The zn(2)-C6 fungal-type DNA-binding region spans 13 to 39 (CDCCRIRRVKCDGKRPCSSCLQNSLDC). Residues 46 to 54 (RKRGPKSIR) carry the Nuclear localization signal motif.

The protein belongs to the MAL13 family.

The protein localises to the nucleus. Regulates the coordinate transcription of structural MAL1S (maltase) and AGT1 (maltose permease) genes. This Saccharomyces cerevisiae (strain ATCC 204508 / S288c) (Baker's yeast) protein is Maltose fermentation regulatory protein MAL13 (MAL13).